The following is a 242-amino-acid chain: Probable transcriptional regulatory protein Dred_1658 (242 aa).

It belongs to the TACO1 family.

The protein localises to the cytoplasm. This Desulforamulus reducens (strain ATCC BAA-1160 / DSM 100696 / MI-1) (Desulfotomaculum reducens) protein is Probable transcriptional regulatory protein Dred_1658.